Consider the following 111-residue polypeptide: Prostate and testis expressed protein 2 (111 aa).

The first 18 residues, M1 to N18, serve as a signal peptide directing secretion. Residues L27 to P108 form the UPAR/Ly6 domain. 4 cysteine pairs are disulfide-bonded: C29–C55, C32–C40, C47–C78, and C82–C99.

It belongs to the PATE family. In terms of tissue distribution, expressed in prostate, testis, brain and lung.

It is found in the secreted. The chain is Prostate and testis expressed protein 2 (Pate2) from Mus musculus (Mouse).